Consider the following 1006-residue polypeptide: UPF0182 protein Arth_2749 (1006 aa).

7 helical membrane-spanning segments follow: residues 18-38 (GALT…IFFA), 64-84 (IIIF…AIRI), 115-135 (VVMI…AASQ), 168-188 (FLGF…IAGI), 211-231 (QIHL…NFWL), 260-280 (SILA…AVIG), and 287-307 (IGTA…PWVI). 3 disordered regions span residues 490-519 (GAPE…FTGN), 896-923 (KAGD…GGTD), and 975-1006 (LGSE…SPSN). Residues 495–509 (SPHREQDRPAGKEGD) are compositionally biased toward basic and acidic residues. Low complexity-rich tracts occupy residues 911-923 (AGGS…GGTD) and 979-1000 (GASP…AATP).

Belongs to the UPF0182 family.

It localises to the cell membrane. The chain is UPF0182 protein Arth_2749 from Arthrobacter sp. (strain FB24).